The chain runs to 199 residues: Protein-methionine-sulfoxide reductase heme-binding subunit MsrQ (199 aa).

Helical transmembrane passes span Ile-8–Trp-28, Leu-82–Ile-102, Pro-116–Thr-136, and Val-153–Ser-173.

Belongs to the MsrQ family. In terms of assembly, heterodimer of a catalytic subunit (MsrP) and a heme-binding subunit (MsrQ). Requires FMN as cofactor. Heme b is required as a cofactor.

It localises to the cell inner membrane. In terms of biological role, part of the MsrPQ system that repairs oxidized periplasmic proteins containing methionine sulfoxide residues (Met-O), using respiratory chain electrons. Thus protects these proteins from oxidative-stress damage caused by reactive species of oxygen and chlorine generated by the host defense mechanisms. MsrPQ is essential for the maintenance of envelope integrity under bleach stress, rescuing a wide series of structurally unrelated periplasmic proteins from methionine oxidation, including the primary periplasmic chaperone SurA and the lipoprotein Pal. MsrQ provides electrons for reduction to the reductase catalytic subunit MsrP, using the quinone pool of the respiratory chain. The sequence is that of Protein-methionine-sulfoxide reductase heme-binding subunit MsrQ from Salmonella arizonae (strain ATCC BAA-731 / CDC346-86 / RSK2980).